A 70-amino-acid chain; its full sequence is Large ribosomal subunit protein bL31 (70 aa).

Zn(2+) contacts are provided by cysteine 16, cysteine 18, cysteine 37, and cysteine 40.

This sequence belongs to the bacterial ribosomal protein bL31 family. Type A subfamily. In terms of assembly, part of the 50S ribosomal subunit. Requires Zn(2+) as cofactor.

Binds the 23S rRNA. In Colwellia psychrerythraea (strain 34H / ATCC BAA-681) (Vibrio psychroerythus), this protein is Large ribosomal subunit protein bL31.